A 504-amino-acid polypeptide reads, in one-letter code: MTTNNGFDSLHSHAQRLKGASIPSLLAAEPGRVQELALRVGPLYVSFARQTYDAAALQALLALAAERDVGAAITRLFRGEQVNLTEGRAALHTALRGDVVDAPVAAEAYATARDIRQRMGVLVRALEDSGVTDVVSVGIGGSDLGPRLVADALRPVTGARLRVHFVSNVDGAAMQRTLATLDPAKTAGILISKTFGTQETLLNGQILHDWLGGSERLYAVSANPERAAKAFAIAADRVLPMWDWVGGRYSLWSAVGFPIALAIGFERFEQLLEGAAQMDAHALDAPLERNLPVLHGLTDIWNRNLLGYATHAVMTYDQRLALLPAYLQQLVMESLGKRVQRDGQPVTTDTVPVWWGGAGTDVQHSFFQALHQGTSIIPADFIGCVHNDDPYTINHQALLANLLAQTEALANGQGSDDPHRDYPGGRPSTLILLDALTPQALGALIAMYEHAVYVQSVIWNINAFDQFGVELGKQLASGLLPALQGEDVAVADLMTREILAQLKR.

Glutamate 333 (proton donor) is an active-site residue. Catalysis depends on residues histidine 364 and lysine 473.

Belongs to the GPI family.

The protein resides in the cytoplasm. It carries out the reaction alpha-D-glucose 6-phosphate = beta-D-fructose 6-phosphate. It participates in carbohydrate biosynthesis; gluconeogenesis. It functions in the pathway carbohydrate degradation; glycolysis; D-glyceraldehyde 3-phosphate and glycerone phosphate from D-glucose: step 2/4. Its function is as follows. Catalyzes the reversible isomerization of glucose-6-phosphate to fructose-6-phosphate. The chain is Glucose-6-phosphate isomerase from Stenotrophomonas maltophilia (strain R551-3).